Consider the following 904-residue polypeptide: MQAAAAASFWLLCVLGTCPLARCGRAGVASLKGLERGKENRFLERQSIIPLRLIYRLGGEDETQHNQLDTRVRGDPGGPQLTHVDKASFRVDAFGTSFVLDVLLNHELLSSGYVERQIEHGGKVVENKGGEHCYYQGQIRGNPVSFVALSTCHGLHGMFYDGNHTYLIEPEENEKSQESSHCHSVYKSRQFEFPLDDLPSEFQRVNITPPQFILKPRLKRRKRQLLRFPRNVEEETKYIELMIVNDHLMFKKHRLSVVYTNTYAKSVVNMADVIYKDQLKTRIVLVAMETWAADNKFAISENPLITLREFMKYRRDFIKEKADAVHLFSGSQFESSRSGAAYIGGICSLLRGGGVNEFGKTDLMAVTLAQSLAHNVGIISDKRKLASGECKCEDTWSGCIMGDTGYYLPKKFTQCNVEEYHDFLNSGGGACLFNKPSKLLDPPECGNGFIETGEECDCGTPAECALEGAECCKKCTLTQDSQCSDGLCCKKCKFQPLGTVCREAVNDCDIREICSGNSSQCAPNVHKMDGYSCDGTQGICFGGRCKTRDRQCKYIWGQKVTASDRYCYEKLNIEGTEKGNCGKDKDTWTQCNKRDVLCGYLLCTNIGNIPRLGELDGEITSTLVVQQGRTLNCSGAHVKLEEDVDLGYVEDGTPCGPQMMCLEHRCLPVASFNFSTCSSSKAGTVCSGNGVCSNELKCVCNRHWTGADCGTHFPHNDDAKTGITLSGNGVAGTNIIIGIIAGTILVLALILGITAWGYKNYREQRQLPQGDYVKKPGDGDSFYSDFPPGGSTNSASSSKKRSNGLSHSWSERIPDTKHISDICENGRPRSNSWQGNMGGNKKKIRGKRFRPRSNSTETLSPAKSPSSSTGSIASSRKYPYPMPPLPDEGKTAGRQSARLWETSI.

The N-terminal stretch at 1 to 23 (MQAAAAASFWLLCVLGTCPLARC) is a signal peptide. Residues 24–223 (GRAGVASLKG…LKPRLKRRKR (200 aa)) constitute a propeptide that is removed on maturation. At 24-734 (GRAGVASLKG…LSGNGVAGTN (711 aa)) the chain is on the extracellular side. N-linked (GlcNAc...) asparagine glycosylation is present at N163. Residues 237–436 (KYIELMIVND…GGGACLFNKP (200 aa)) enclose the Peptidase M12B domain. 17 disulfide bridges follow: C347–C431, C390–C415, C392–C399, C445–C475, C456–C472, C458–C464, C471–C492, C483–C489, C488–C514, C501–C521, C508–C540, C533–C545, C552–C603, C567–C633, C581–C591, C598–C661, and C655–C666. Residues 442–529 (PPECGNGFIE…QCAPNVHKMD (88 aa)) enclose the Disintegrin domain. A glycan (N-linked (GlcNAc...) asparagine) is linked at N517. N-linked (GlcNAc...) asparagine glycosylation is present at N632. The N-linked (GlcNAc...) asparagine glycan is linked to N673. Residues 673 to 710 (NFSTCSSSKAGTVCSGNGVCSNELKCVCNRHWTGADCG) form the EGF-like domain. Intrachain disulfides connect C677–C692, C686–C698, and C700–C709. A helical membrane pass occupies residues 735-755 (IIIGIIAGTILVLALILGITA). The Cytoplasmic segment spans residues 756–857 (WGYKNYREQR…RFRPRSNSTE (102 aa)). A disordered region spans residues 769–904 (QGDYVKKPGD…QSARLWETSI (136 aa)). Residues 789-808 (GGSTNSASSSKKRSNGLSHS) are compositionally biased toward low complexity. Phosphoserine occurs at positions 808, 817, and 832. A compositionally biased stretch (basic and acidic residues) spans 809–827 (WSERIPDTKHISDICENGR). Basic residues predominate over residues 840 to 851 (NKKKIRGKRFRP). A phosphoserine mark is found at S855, S860, S864, S868, and M882. Positions 860-875 (SPAKSPSSSTGSIASS) are enriched in low complexity.

In terms of assembly, interacts with LGI1. Can bind to LGI4. Interacts with KCNA2, DLG2 and DLG4. Interacts with ADAM11. Interacts (via C-terminus) with YWHAB/14-3-3 beta. Interacts (via C-terminus) with YWHAZ/14-3-3 zeta. Post-translationally, the precursor is cleaved by a furin endopeptidase. In terms of tissue distribution, detected in juxtaparanodal zones in the central nervous system and at nerve terminal plexuses of basket cells in the cerebellum (at protein level). Expressed at high levels in the brain. Strongly expressed in cerebellar granule cells and hippocampus. In spinal cord, expression is restricted to gray matter.

It is found in the cell membrane. Its subcellular location is the cell projection. It localises to the axon. Probable ligand for integrin in the brain. This is a non catalytic metalloprotease-like protein. Involved in regulation of cell adhesion and spreading and in inhibition of cell proliferation. Neuronal receptor for LGI1. The sequence is that of Disintegrin and metalloproteinase domain-containing protein 22 (Adam22) from Mus musculus (Mouse).